A 293-amino-acid polypeptide reads, in one-letter code: MISGIINLKKEAGMTSHDAVFKLRKILKEKKIGHGGTLDPDVIGVLPIAVGKATRVLEYMTEAGKVYEGQITLGFSTTTEDASGELLQWTPVDETLSVELIDQAMTCFMGQITQVPPMYSAVKVNGKKLYEYARAGQEVERPQRQVRIYDFKRTSDLVFEDECCHFDFRVSCSKGTYIRTLAVDLGQKLGYASHMSFLKRTASAGLDLSQALTLAEIAEKVEEKDFSFLLPIEYGVLDLPRIDLNPKQTKEVSFGRRLKLLRQEELLAAFFENQLVAVLEKRDTSYKPKKVFL.

The active-site Nucleophile is the aspartate 39.

This sequence belongs to the pseudouridine synthase TruB family. Type 1 subfamily.

It carries out the reaction uridine(55) in tRNA = pseudouridine(55) in tRNA. Functionally, responsible for synthesis of pseudouridine from uracil-55 in the psi GC loop of transfer RNAs. The protein is tRNA pseudouridine synthase B of Streptococcus mutans serotype c (strain ATCC 700610 / UA159).